The following is a 146-amino-acid chain: VHWTSEEKQYITSLWAKVNVGEVGGEALARLLIVYPWTQRFFASFGNLSSANAILHNAKVLAHGQKVLTSFGEAVKNLDNIKKTFAQLSELHCEKLHVDPENFKLLGNILIIVLATHFPKEFTPASQAAWTKLVNAVAHALALGYH.

A Globin domain is found at 2–146 (HWTSEEKQYI…VAHALALGYH (145 aa)). Residues H63 and H92 each contribute to the heme b site.

It belongs to the globin family. In terms of assembly, hemoglobins A and D are heterotetramers of alpha-1, alpha-2 and two identical beta chains. As to expression, red blood cells.

Functionally, involved in oxygen transport from the lung to the various peripheral tissues. This Aldabrachelys gigantea (Aldabra giant tortoise) protein is Hemoglobin A/D subunit beta.